The following is a 317-amino-acid chain: Spermidine synthase 2 (317 aa).

One can recognise a PABS domain in the interval 27–264; that stretch reads PGWFSEISPL…GMIGFMLCST (238 aa). S-adenosyl 3-(methylsulfanyl)propylamine is bound at residue glutamine 58. Tyrosine 88 is a binding site for putrescine. Residues glutamine 89, aspartate 113, glutamate 133, 164–165, and aspartate 183 contribute to the S-adenosyl 3-(methylsulfanyl)propylamine site; that span reads DG. Aspartate 183 (proton acceptor) is an active-site residue. Putrescine is bound by residues 183-186 and tyrosine 252; that span reads DSSD.

This sequence belongs to the spermidine/spermine synthase family.

It carries out the reaction S-adenosyl 3-(methylsulfanyl)propylamine + putrescine = S-methyl-5'-thioadenosine + spermidine + H(+). The protein operates within amine and polyamine biosynthesis; spermidine biosynthesis; spermidine from putrescine: step 1/1. The chain is Spermidine synthase 2 from Datura stramonium (Jimsonweed).